The sequence spans 4963 residues: Kettin homolog (4963 aa).

3 Ig-like domains span residues P18–L105, P133–S220, and P303–E392. 5 disordered regions span residues L396–Q420, R466–R501, I557–V578, Q598–F622, and T652–H696. Composition is skewed to basic and acidic residues over residues P399 to Q417, R466 to L475, and F484 to R501. Residues E401–Q517 adopt a coiled-coil conformation. Positions I557–Q576 are enriched in low complexity. A compositionally biased stretch (low complexity) spans A658–G685. 20 Ig-like domains span residues P706–N796, P806–V893, P937–A1027, P1065–I1155, F1199–T1281, P1462–T1554, P1594–R1687, P1728–N1819, P1992–E2085, P2126–K2217, P2258–T2350, P2391–T2481, P2522–S2613, P2654–G2745, P2787–T2878, P2919–R3010, P3051–K3141, P3182–E3273, P3314–S3407, and P3448–T3539. C827 and C877 are joined by a disulfide. The cysteines at positions 1201 and 1265 are disulfide-linked. C1618 and C1671 form a disulfide bridge. Disulfide bonds link C2016/C2069 and C2148/C2201. Over residues E3567 to P3583 the composition is skewed to basic and acidic residues. The tract at residues E3567–L3590 is disordered. Ig-like domains lie at P3584 to V3677, P3720 to A3811, P3821 to T3913, P3962 to A4052, and P4098 to D4185. Disulfide bonds link C3606/C3659 and C3742/C3795. The interval R4193–R4963 is required for F-actin binding. Over residues D4319–D4329 the composition is skewed to basic and acidic residues. Residues D4319–L4357 form a disordered region. Ig-like domains are found at residues P4546–T4634, P4645–N4733, P4752–T4842, and P4872–T4960.

As to quaternary structure, interacts (via Ig-like domains) with F-actin. Expressed in the pharyngeal, body wall, and anal depressor muscles. Expression in these muscles is higher in hermaphrodites than in males. Expressed in the vulva and the myoepithelial sheath of the proximal ovary. Expressed in the proximal gonad of males. Not expressed in the dense bodies of the obliquely striated body wall muscle.

The protein resides in the cytoplasm. It is found in the myofibril. The protein localises to the sarcomere. It localises to the cytoskeleton. In terms of biological role, positively regulates actin filament organization and provides mechanical stability to the myofibrils during body wall muscle contraction. Required for the organization of sarcomeric actin filaments and myosin protein myo-3 in striated body wall muscle cells. Not required for assembly of dense bodies, which are a type of integrin-based adhesion structure that link the plasma membrane to thin filaments of myofibrils, in body wall muscle. Not required for the atn-1 protein to localize to the dense bodies. The protein is Kettin homolog of Caenorhabditis elegans.